The following is a 153-amino-acid chain: 6,7-dimethyl-8-ribityllumazine synthase (153 aa).

Residues Phe22, 56 to 58 (AFE), and 80 to 82 (TVI) each bind 5-amino-6-(D-ribitylamino)uracil. 85–86 (AT) lines the (2S)-2-hydroxy-3-oxobutyl phosphate pocket. Catalysis depends on His88, which acts as the Proton donor. Residue Phe113 coordinates 5-amino-6-(D-ribitylamino)uracil. Residue Arg127 participates in (2S)-2-hydroxy-3-oxobutyl phosphate binding.

It belongs to the DMRL synthase family.

The catalysed reaction is (2S)-2-hydroxy-3-oxobutyl phosphate + 5-amino-6-(D-ribitylamino)uracil = 6,7-dimethyl-8-(1-D-ribityl)lumazine + phosphate + 2 H2O + H(+). Its pathway is cofactor biosynthesis; riboflavin biosynthesis; riboflavin from 2-hydroxy-3-oxobutyl phosphate and 5-amino-6-(D-ribitylamino)uracil: step 1/2. Catalyzes the formation of 6,7-dimethyl-8-ribityllumazine by condensation of 5-amino-6-(D-ribitylamino)uracil with 3,4-dihydroxy-2-butanone 4-phosphate. This is the penultimate step in the biosynthesis of riboflavin. The protein is 6,7-dimethyl-8-ribityllumazine synthase of Clostridium perfringens (strain ATCC 13124 / DSM 756 / JCM 1290 / NCIMB 6125 / NCTC 8237 / Type A).